We begin with the raw amino-acid sequence, 33 residues long: Photosystem II reaction center protein Psb30 (33 aa).

A helical transmembrane segment spans residues 5 to 25 (VLAQLTVLTLIVISGPLVIAL).

This sequence belongs to the Psb30/Ycf12 family. As to quaternary structure, PSII is composed of 1 copy each of membrane proteins PsbA, PsbB, PsbC, PsbD, PsbE, PsbF, PsbH, PsbI, PsbJ, PsbK, PsbL, PsbM, PsbT, PsbX, PsbY, PsbZ, Psb30/Ycf12, peripheral proteins of the oxygen-evolving complex and a large number of cofactors. It forms dimeric complexes.

It localises to the plastid. The protein resides in the chloroplast thylakoid membrane. Its function is as follows. A core subunit of photosystem II (PSII), probably helps stabilize the reaction center. The sequence is that of Photosystem II reaction center protein Psb30 from Cycas taitungensis (Prince sago).